A 72-amino-acid polypeptide reads, in one-letter code: EAGEECDCGAPENPCCDAATCKLRPGAQCAEGLCCDQCRFKGAGKICRRARGDNPDDRCTGQSADCPRNRFY.

The region spanning 1 to 72 is the Disintegrin domain; sequence EAGEECDCGA…SADCPRNRFY (72 aa). Disulfide bonds link C6/C21, C8/C16, C15/C38, C29/C35, C34/C59, and C47/C66. Positions 51 to 53 match the Cell attachment site motif; the sequence is RGD. The disordered stretch occupies residues 52 to 72; the sequence is GDNPDDRCTGQSADCPRNRFY.

Belongs to the venom metalloproteinase (M12B) family. P-II subfamily. P-IIa sub-subfamily. Monomer. As to expression, expressed by the venom gland.

The protein localises to the secreted. Inhibits fibrinogen interaction with platelets. Acts by binding to the glycoprotein IIb-IIIa receptor (ITGA2B/ITGB3) on the platelet surface and inhibits aggregation induced by ADP, thrombin, platelet-activating factor and collagen. Also inhibits T24 and SK-Mel-28 cell adhesion to fibronectin with IC(50) of 4.4 uM and 33 nM, respectively. The protein is Disintegrin batroxostatin of Bothrops atrox (Barba amarilla).